Consider the following 91-residue polypeptide: Teretoxin Tan22.13 (91 aa).

Positions 1 to 21 (MKVQILFALMMVLVTLCLGQK) are cleaved as a signal peptide. A propeptide spanning residues 22–24 (MQR) is cleaved from the precursor.

It belongs to the teretoxin C (TC) superfamily. In terms of processing, contains 4 disulfide bonds. As to expression, expressed by the venom duct.

It is found in the secreted. The protein is Teretoxin Tan22.13 of Terebra anilis (Auger snail).